Reading from the N-terminus, the 218-residue chain is Thiamine-phosphate synthase (218 aa).

4-amino-2-methyl-5-(diphosphooxymethyl)pyrimidine is bound by residues 46-50 and aspartate 83; that span reads QFRDK. The Mg(2+) site is built by aspartate 84 and aspartate 103. Serine 122 is a 4-amino-2-methyl-5-(diphosphooxymethyl)pyrimidine binding site. 149 to 151 serves as a coordination point for 2-[(2R,5Z)-2-carboxy-4-methylthiazol-5(2H)-ylidene]ethyl phosphate; sequence TNS. Lysine 152 lines the 4-amino-2-methyl-5-(diphosphooxymethyl)pyrimidine pocket. 2-[(2R,5Z)-2-carboxy-4-methylthiazol-5(2H)-ylidene]ethyl phosphate is bound by residues glycine 181 and 201–202; that span reads IT.

Belongs to the thiamine-phosphate synthase family. It depends on Mg(2+) as a cofactor.

The enzyme catalyses 2-[(2R,5Z)-2-carboxy-4-methylthiazol-5(2H)-ylidene]ethyl phosphate + 4-amino-2-methyl-5-(diphosphooxymethyl)pyrimidine + 2 H(+) = thiamine phosphate + CO2 + diphosphate. It carries out the reaction 2-(2-carboxy-4-methylthiazol-5-yl)ethyl phosphate + 4-amino-2-methyl-5-(diphosphooxymethyl)pyrimidine + 2 H(+) = thiamine phosphate + CO2 + diphosphate. It catalyses the reaction 4-methyl-5-(2-phosphooxyethyl)-thiazole + 4-amino-2-methyl-5-(diphosphooxymethyl)pyrimidine + H(+) = thiamine phosphate + diphosphate. The protein operates within cofactor biosynthesis; thiamine diphosphate biosynthesis; thiamine phosphate from 4-amino-2-methyl-5-diphosphomethylpyrimidine and 4-methyl-5-(2-phosphoethyl)-thiazole: step 1/1. Its function is as follows. Condenses 4-methyl-5-(beta-hydroxyethyl)thiazole monophosphate (THZ-P) and 2-methyl-4-amino-5-hydroxymethyl pyrimidine pyrophosphate (HMP-PP) to form thiamine monophosphate (TMP). The protein is Thiamine-phosphate synthase of Actinobacillus pleuropneumoniae serotype 7 (strain AP76).